A 475-amino-acid polypeptide reads, in one-letter code: AP-1 complex subunit mu-1-I (475 aa).

Residues 175–473 (KNEAFLDIVE…TQSGDDYTIR (299 aa)) form the MHD domain. Positions 240–262 (ASATTSDNNTETDKKPSITSSSA) are disordered.

It belongs to the adaptor complexes medium subunit family. Adaptor protein complex 1 (AP-1) is a heterotetramer composed of two large adaptins (gamma-type subunit APL4 and beta-type subunit APL2), a medium adaptin (mu-type subunit APM1) and a small adaptin (sigma-type subunit APS1). AP-1 interacts with clathrin.

It localises to the cytoplasmic vesicle. It is found in the clathrin-coated vesicle membrane. The protein resides in the membrane. The protein localises to the clathrin-coated pit. In terms of biological role, component of the adaptor complexes which link clathrin to receptors in coated vesicles. Clathrin-associated protein complexes are believed to interact with the cytoplasmic tails of membrane proteins, leading to their selection and concentration. The AP-1 complex interacts directly with clathrin. AP57 is probably a subunit of the Golgi membrane adaptor. This Saccharomyces cerevisiae (strain ATCC 204508 / S288c) (Baker's yeast) protein is AP-1 complex subunit mu-1-I (APM1).